The following is a 215-amino-acid chain: Cytochrome b6 (215 aa).

A helical transmembrane segment spans residues 32-52; sequence IFYCLGGIVFVSFLIQVATGF. C35 lines the heme c pocket. Residues H86 and H100 each coordinate heme b. 3 helical membrane-spanning segments follow: residues 90–110, 116–136, and 186–206; these read VSMM…TGGF, LTWV…VTGY, and LHTF…FLMI. 2 residues coordinate heme b: H187 and H202.

This sequence belongs to the cytochrome b family. PetB subfamily. The 4 large subunits of the cytochrome b6-f complex are cytochrome b6, subunit IV (17 kDa polypeptide, PetD), cytochrome f and the Rieske protein, while the 4 small subunits are PetG, PetL, PetM and PetN. The complex functions as a dimer. The cofactor is heme b. Heme c serves as cofactor.

It localises to the plastid. The protein localises to the chloroplast thylakoid membrane. In terms of biological role, component of the cytochrome b6-f complex, which mediates electron transfer between photosystem II (PSII) and photosystem I (PSI), cyclic electron flow around PSI, and state transitions. This Pyropia yezoensis (Susabi-nori) protein is Cytochrome b6.